The primary structure comprises 220 residues: Splicing factor U2AF 26 kDa subunit (220 aa).

At A2 the chain carries N-acetylalanine. The segment at 12–40 (EKDKVNCSFYFKIGVCRHGDRCSRLHNKP) adopts a C3H1-type 1 zinc-finger fold. The region spanning 65–147 (SHCHVSDVEV…QAVHGELSPV (83 aa)) is the RRM domain. The C3H1-type 2 zinc-finger motif lies at 149-176 (DFRESCCRQYEMGECTRGGFCNFMHLRP). The disordered stretch occupies residues 185-220 (LYGRGPRRRSPPRFHTGHHPRERNHRCSPDHWHGRF). Positions 189–208 (GPRRRSPPRFHTGHHPRERN) are enriched in basic residues. Residues 209-220 (HRCSPDHWHGRF) show a composition bias toward basic and acidic residues.

This sequence belongs to the splicing factor SR family. In terms of assembly, interacts with GFI1, U2AF2 and C1QBP. In terms of tissue distribution, isoform 2 is widely expressed. Isoform 3 is highly expressed in heart, brain and lung, lower expressed in thymus and much lower expressed in peripheral blood leukocytes.

The protein resides in the nucleus. The protein localises to the nucleus speckle. It is found in the cytoplasm. Functionally, RNA-binding protein that function as a pre-mRNA splicing factor. Plays a critical role in both constitutive and enhancer-dependent splicing by mediating protein-protein interactions and protein-RNA interactions required for accurate 3'-splice site selection. Acts by enhancing the binding of U2AF2 to weak pyrimidine tracts. Also participates in the regulation of alternative pre-mRNA splicing. Activates exon 5 skipping of PTPRC during T-cell activation; an event reversed by GFI1. Binds to RNA at the AG dinucleotide at the 3'-splice site. Shows a preference for AGC or AGA. The chain is Splicing factor U2AF 26 kDa subunit (U2AF1L4) from Homo sapiens (Human).